The following is a 208-amino-acid chain: ATP-dependent Clp protease proteolytic subunit (208 aa).

The active-site Nucleophile is serine 101. Residue histidine 126 is part of the active site.

Belongs to the peptidase S14 family. As to quaternary structure, component of the chloroplastic Clp protease core complex.

The protein resides in the plastid. Its subcellular location is the chloroplast stroma. It carries out the reaction Hydrolysis of proteins to small peptides in the presence of ATP and magnesium. alpha-casein is the usual test substrate. In the absence of ATP, only oligopeptides shorter than five residues are hydrolyzed (such as succinyl-Leu-Tyr-|-NHMec, and Leu-Tyr-Leu-|-Tyr-Trp, in which cleavage of the -Tyr-|-Leu- and -Tyr-|-Trp bonds also occurs).. Functionally, cleaves peptides in various proteins in a process that requires ATP hydrolysis. Has a chymotrypsin-like activity. Plays a major role in the degradation of misfolded proteins. The protein is ATP-dependent Clp protease proteolytic subunit of Nephroselmis olivacea (Green alga).